We begin with the raw amino-acid sequence, 263 residues long: Kallikrein 1-related peptidase b24 (263 aa).

Residues 1 to 17 form the signal peptide; that stretch reads MWFLILFLALSLGGIDA. A propeptide spans 18–24 (activation peptide); sequence APPVQSR. A Peptidase S1 domain is found at 25–260; that stretch reads VVGGFKCEKN…FASWIKDTMA (236 aa). 5 cysteine pairs are disulfide-bonded: Cys31–Cys175, Cys50–Cys66, Cys154–Cys221, Cys186–Cys200, and Cys211–Cys236. His65 functions as the Charge relay system in the catalytic mechanism. Residues Asn69 and Asn105 are each glycosylated (N-linked (GlcNAc...) asparagine). The active-site Charge relay system is the Asp122. Residue Asn185 is glycosylated (N-linked (GlcNAc...) asparagine). Ser215 (charge relay system) is an active-site residue.

Belongs to the peptidase S1 family. Kallikrein subfamily.

The enzyme catalyses Preferential cleavage of Arg-|-Xaa bonds in small molecule substrates. Highly selective action to release kallidin (lysyl-bradykinin) from kininogen involves hydrolysis of Met-|-Xaa or Leu-|-Xaa.. Functionally, glandular kallikreins cleave Met-Lys and Arg-Ser bonds in kininogen to release Lys-bradykinin. This Mus musculus (Mouse) protein is Kallikrein 1-related peptidase b24 (Klk1b24).